The primary structure comprises 341 residues: Phosphate acyltransferase (341 aa).

Belongs to the PlsX family. As to quaternary structure, homodimer. Probably interacts with PlsY.

Its subcellular location is the cytoplasm. It carries out the reaction a fatty acyl-[ACP] + phosphate = an acyl phosphate + holo-[ACP]. The protein operates within lipid metabolism; phospholipid metabolism. Functionally, catalyzes the reversible formation of acyl-phosphate (acyl-PO(4)) from acyl-[acyl-carrier-protein] (acyl-ACP). This enzyme utilizes acyl-ACP as fatty acyl donor, but not acyl-CoA. This is Phosphate acyltransferase from Vibrio cholerae serotype O1 (strain ATCC 39541 / Classical Ogawa 395 / O395).